The following is a 129-amino-acid chain: Fluoride-specific ion channel FluC (129 aa).

4 consecutive transmembrane segments (helical) span residues 4–24 (VLIV…LGEW), 30–50 (GFPT…GWLL), 63–83 (WSLL…TFSV), and 95–115 (IVAS…AYIG). Gly73 and Thr76 together coordinate Na(+).

This sequence belongs to the fluoride channel Fluc/FEX (TC 1.A.43) family.

Its subcellular location is the cell membrane. The catalysed reaction is fluoride(in) = fluoride(out). Its activity is regulated as follows. Na(+) is not transported, but it plays an essential structural role and its presence is essential for fluoride channel function. Functionally, fluoride-specific ion channel. Important for reducing fluoride concentration in the cell, thus reducing its toxicity. In Oceanobacillus iheyensis (strain DSM 14371 / CIP 107618 / JCM 11309 / KCTC 3954 / HTE831), this protein is Fluoride-specific ion channel FluC.